The sequence spans 115 residues: DNA-directed RNA polymerase II subunit RPB11-b1 (115 aa).

Belongs to the archaeal Rpo11/eukaryotic RPB11/RPC19 RNA polymerase subunit family. Component of the RNA polymerase II (Pol II) complex consisting of 12 subunits. As to expression, ubiquitously expressed.

Its subcellular location is the nucleus. Its function is as follows. DNA-dependent RNA polymerase catalyzes the transcription of DNA into RNA using the four ribonucleoside triphosphates as substrates. Component of RNA polymerase II which synthesizes mRNA precursors and many functional non-coding RNAs. Pol II is the central component of the basal RNA polymerase II transcription machinery. It is composed of mobile elements that move relative to each other. RPB11 is part of the core element with the central large cleft. The chain is DNA-directed RNA polymerase II subunit RPB11-b1 (POLR2J2) from Homo sapiens (Human).